The sequence spans 180 residues: Bifunctional protein PyrR (180 aa).

The PRPP-binding motif lies at 101-113; it reads VILVDDVLYTGRT.

The protein belongs to the purine/pyrimidine phosphoribosyltransferase family. PyrR subfamily. As to quaternary structure, homodimer and homohexamer; in equilibrium.

The enzyme catalyses UMP + diphosphate = 5-phospho-alpha-D-ribose 1-diphosphate + uracil. Functionally, regulates transcriptional attenuation of the pyrimidine nucleotide (pyr) operon by binding in a uridine-dependent manner to specific sites on pyr mRNA. This disrupts an antiterminator hairpin in the RNA and favors formation of a downstream transcription terminator, leading to a reduced expression of downstream genes. Also displays a weak uracil phosphoribosyltransferase activity which is not physiologically significant. The protein is Bifunctional protein PyrR of Bacillus thuringiensis subsp. konkukian (strain 97-27).